The sequence spans 58 residues: UPF0391 membrane protein Sbal_1421 (58 aa).

2 helical membrane-spanning segments follow: residues leucine 6–alanine 26 and alanine 28–valine 48.

It belongs to the UPF0391 family.

The protein resides in the cell membrane. This Shewanella baltica (strain OS155 / ATCC BAA-1091) protein is UPF0391 membrane protein Sbal_1421.